Here is a 1309-residue protein sequence, read N- to C-terminus: DNA repair protein RAD9 (1309 aa).

Polar residues predominate over residues 1–19 (MSGQLVQWKSSPDRVTQSA). Residues 1-39 (MSGQLVQWKSSPDRVTQSAIKEALHSPLADGDMNEMNVP) form a disordered region. Residues serine 26, serine 56, and serine 205 each carry the phosphoserine modification. Position 218 is a phosphothreonine (threonine 218). Serine 248 bears the Phosphoserine mark. Residues 280–299 (NIGAIEEKNPVKKKSENYSS) are disordered. Residues 284-299 (IEEKNPVKKKSENYSS) are compositionally biased toward basic and acidic residues. Phosphoserine is present on residues serine 312 and serine 315. Positions 342–365 (NSAVSGTPSRNNAEEEMYSSESVN) are disordered. A compositionally biased stretch (polar residues) spans 343–352 (SAVSGTPSRN). A Phosphoserine modification is found at serine 462. 2 positions are modified to phosphothreonine: threonine 471 and threonine 474. A disordered region spans residues 490–512 (PETSSPSKNTMSKPSNSSPIPKE). The segment covering 491–508 (ETSSPSKNTMSKPSNSSP) has biased composition (polar residues). Serine 568 carries the phosphoserine modification. Disordered regions lie at residues 636 to 655 (KGNS…DKQD) and 691 to 731 (IIQN…NSDL). The segment covering 642–655 (LHDDNKECNSDKQD) has biased composition (basic and acidic residues). Serine 729 is subject to Phosphoserine. The BRCT domain maps to 994–1122 (RTGNVFDKCI…RIVPHLIYQY (129 aa)).

As to quaternary structure, physically associates with RAD53.

The protein resides in the nucleus. In terms of biological role, essential for cell cycle arrest at the G2 stage following DNA damage by X-irradiation or inactivation of DNA ligase. In Saccharomyces cerevisiae (strain ATCC 204508 / S288c) (Baker's yeast), this protein is DNA repair protein RAD9 (RAD9).